Reading from the N-terminus, the 248-residue chain is 1-(5-phosphoribosyl)-5-[(5-phosphoribosylamino)methylideneamino] imidazole-4-carboxamide isomerase (248 aa).

Residue Asp8 is the Proton acceptor of the active site. Asp129 (proton donor) is an active-site residue.

The protein belongs to the HisA/HisF family.

It is found in the cytoplasm. It carries out the reaction 1-(5-phospho-beta-D-ribosyl)-5-[(5-phospho-beta-D-ribosylamino)methylideneamino]imidazole-4-carboxamide = 5-[(5-phospho-1-deoxy-D-ribulos-1-ylimino)methylamino]-1-(5-phospho-beta-D-ribosyl)imidazole-4-carboxamide. It functions in the pathway amino-acid biosynthesis; L-histidine biosynthesis; L-histidine from 5-phospho-alpha-D-ribose 1-diphosphate: step 4/9. The protein is 1-(5-phosphoribosyl)-5-[(5-phosphoribosylamino)methylideneamino] imidazole-4-carboxamide isomerase of Rhizobium johnstonii (strain DSM 114642 / LMG 32736 / 3841) (Rhizobium leguminosarum bv. viciae).